Here is a 379-residue protein sequence, read N- to C-terminus: Bifunctional enzyme IspD/IspF (379 aa).

Positions Met1–Val223 are 2-C-methyl-D-erythritol 4-phosphate cytidylyltransferase. The interval Arg224–Ala379 is 2-C-methyl-D-erythritol 2,4-cyclodiphosphate synthase. A divalent metal cation is bound by residues Asp230 and His232. 4-CDP-2-C-methyl-D-erythritol 2-phosphate is bound by residues Asp230–His232 and His256–Ser257. His264 contributes to the a divalent metal cation binding site. 4-CDP-2-C-methyl-D-erythritol 2-phosphate contacts are provided by residues Asp278 to Gly280, Thr354 to Glu357, Phe361, and Arg364.

The protein in the N-terminal section; belongs to the IspD/TarI cytidylyltransferase family. IspD subfamily. In the C-terminal section; belongs to the IspF family. A divalent metal cation is required as a cofactor.

It carries out the reaction 2-C-methyl-D-erythritol 4-phosphate + CTP + H(+) = 4-CDP-2-C-methyl-D-erythritol + diphosphate. It catalyses the reaction 4-CDP-2-C-methyl-D-erythritol 2-phosphate = 2-C-methyl-D-erythritol 2,4-cyclic diphosphate + CMP. Its pathway is isoprenoid biosynthesis; isopentenyl diphosphate biosynthesis via DXP pathway; isopentenyl diphosphate from 1-deoxy-D-xylulose 5-phosphate: step 2/6. It functions in the pathway isoprenoid biosynthesis; isopentenyl diphosphate biosynthesis via DXP pathway; isopentenyl diphosphate from 1-deoxy-D-xylulose 5-phosphate: step 4/6. Bifunctional enzyme that catalyzes the formation of 4-diphosphocytidyl-2-C-methyl-D-erythritol from CTP and 2-C-methyl-D-erythritol 4-phosphate (MEP) (IspD), and catalyzes the conversion of 4-diphosphocytidyl-2-C-methyl-D-erythritol 2-phosphate (CDP-ME2P) to 2-C-methyl-D-erythritol 2,4-cyclodiphosphate (ME-CPP) with a corresponding release of cytidine 5-monophosphate (CMP) (IspF). This is Bifunctional enzyme IspD/IspF from Rhodobacter capsulatus (strain ATCC BAA-309 / NBRC 16581 / SB1003).